The sequence spans 2383 residues: Reducing polyketide synthase rdc5 (2383 aa).

The region spanning 10-438 (RAPIAIIGMS…GTNAHLVLER (429 aa)) is the Ketosynthase family 3 (KS3) domain. Active-site for beta-ketoacyl synthase activity residues include C186, H321, and H361. The interval 550–881 (FVFTGQGAQW…GFAAELFRRG (332 aa)) is malonyl-CoA:ACP transacylase (MAT) domain. The interval 930 to 1066 (KSLIGAERPS…GLFSINYEDS (137 aa)) is N-terminal hotdog fold. One can recognise a PKS/mFAS DH domain in the interval 930 to 1253 (KSLIGAERPS…LAELEVEDAD (324 aa)). Residues 932-1250 (LIGAERPSLD…DFHLAELEVE (319 aa)) are dehydratase (DH) domain. The active-site Proton acceptor; for dehydratase activity is H962. The interval 1094–1253 (VEVISKQAFY…LAELEVEDAD (160 aa)) is C-terminal hotdog fold. Residue D1160 is the Proton donor; for dehydratase activity of the active site. Positions 1663-1977 (GLLNTLHFVS…QGKHVGKMIL (315 aa)) are enoyl reductase (ER) domain. C1776 (phosphocysteine intermediate) is an active-site residue. The ketoreductase (KR) domain stretch occupies residues 2002–2182 (ATYLFIGGLG…VSVNLGIMRD (181 aa)). The region spanning 2300-2377 (AAGPIITKAL…QFAVQIAKKS (78 aa)) is the Carrier domain. S2337 carries the post-translational modification O-(pantetheine 4'-phosphoryl)serine.

Its pathway is secondary metabolite biosynthesis. Its function is as follows. Reducing polyketide synthase; part of the gene cluster that mediates the biosynthesis of radicicol, a resorcylic acid lactone (RAL) that irreversibly inhibits the HSP90 molecular chaperone, an important target for cancer chemotherapy. The radicicol cluster encodes only two apparent post-PKS enzymes, a cytochrome P450 monooxygenase (rdc4) and a non-heme halogenase (rdc2) that could introduce the epoxide and the chlorine, respectively. If this cluster includes all the genes required for radicicol biosynthesis, the remaining structural features of radicicol are presumably generated by the PKSs rdc1 and rdc5. The C-2' ketone could arise if the R-PKS rdc5 and NR-PKS rdc1 each carry out four iterations, in contrast to the five iteration-three iteration split for the hypothemycin PKSs. The origin of the cis 5',6' double bond is not known. The radicicol R-PKS rdc5 ER domain may catalyze either double bond isomerization or reduction in the third iteration. In Metacordyceps chlamydosporia (Nematophagous fungus), this protein is Reducing polyketide synthase rdc5.